The primary structure comprises 355 residues: Protein RecA (355 aa).

78–85 is an ATP binding site; sequence GPESSGKT.

Belongs to the RecA family.

Its subcellular location is the cytoplasm. Can catalyze the hydrolysis of ATP in the presence of single-stranded DNA, the ATP-dependent uptake of single-stranded DNA by duplex DNA, and the ATP-dependent hybridization of homologous single-stranded DNAs. It interacts with LexA causing its activation and leading to its autocatalytic cleavage. The sequence is that of Protein RecA from Rhodobacter capsulatus (Rhodopseudomonas capsulata).